Consider the following 60-residue polypeptide: Large ribosomal subunit protein bL32 (60 aa).

The span at 1-16 (MAVPKRKTSPSKRGMR) shows a compositional bias: basic residues. Positions 1-60 (MAVPKRKTSPSKRGMRRSADALKAPTYVEDKNSGEMRRPHHIDLKTGMYRGRQVLTPKES) are disordered. Residues 28–44 (VEDKNSGEMRRPHHIDL) are compositionally biased toward basic and acidic residues.

This sequence belongs to the bacterial ribosomal protein bL32 family.

This is Large ribosomal subunit protein bL32 from Mesorhizobium japonicum (strain LMG 29417 / CECT 9101 / MAFF 303099) (Mesorhizobium loti (strain MAFF 303099)).